We begin with the raw amino-acid sequence, 600 residues long: Threonine dehydratase, mitochondrial (600 aa).

Lysine 144 is modified (N6-(pyridoxal phosphate)lysine). ACT-like domains lie at 425–497 and 519–590; these read VFLS…DISD and RLYR…DETN.

This sequence belongs to the serine/threonine dehydratase family. As to quaternary structure, homotetramer. Requires pyridoxal 5'-phosphate as cofactor.

The protein resides in the mitochondrion. Its subcellular location is the cytoplasm. It carries out the reaction L-threonine = 2-oxobutanoate + NH4(+). Its pathway is amino-acid biosynthesis; L-isoleucine biosynthesis; 2-oxobutanoate from L-threonine: step 1/1. Its activity is regulated as follows. Isoleucine allosterically inhibits while valine allosterically activates this enzyme. This is Threonine dehydratase, mitochondrial from Schizosaccharomyces pombe (strain 972 / ATCC 24843) (Fission yeast).